We begin with the raw amino-acid sequence, 227 residues long: Small ribosomal subunit protein uS3 (227 aa).

In terms of domain architecture, KH type-2 spans V39–R107.

Belongs to the universal ribosomal protein uS3 family. Part of the 30S ribosomal subunit. Forms a tight complex with proteins S10 and S14.

Binds the lower part of the 30S subunit head. Binds mRNA in the 70S ribosome, positioning it for translation. The polypeptide is Small ribosomal subunit protein uS3 (Coxiella burnetii (strain CbuK_Q154) (Coxiella burnetii (strain Q154))).